Reading from the N-terminus, the 94-residue chain is Co-chaperonin GroES (94 aa).

It belongs to the GroES chaperonin family. As to quaternary structure, heptamer of 7 subunits arranged in a ring. Interacts with the chaperonin GroEL.

The protein localises to the cytoplasm. In terms of biological role, together with the chaperonin GroEL, plays an essential role in assisting protein folding. The GroEL-GroES system forms a nano-cage that allows encapsulation of the non-native substrate proteins and provides a physical environment optimized to promote and accelerate protein folding. GroES binds to the apical surface of the GroEL ring, thereby capping the opening of the GroEL channel. This Staphylococcus epidermidis protein is Co-chaperonin GroES.